Consider the following 419-residue polypeptide: Arginine biosynthesis bifunctional protein ArgJ 1, mitochondrial (419 aa).

Substrate is bound by residues Lys177, Thr188, Glu275, Asn414, and Thr419. Thr188 serves as the catalytic Nucleophile.

It belongs to the ArgJ family. As to quaternary structure, heterodimer of an alpha and a beta chain. The alpha and beta chains are autoproteolytically processed from a single precursor protein within the mitochondrion.

The protein localises to the mitochondrion matrix. The enzyme catalyses N(2)-acetyl-L-ornithine + L-glutamate = N-acetyl-L-glutamate + L-ornithine. The catalysed reaction is L-glutamate + acetyl-CoA = N-acetyl-L-glutamate + CoA + H(+). Its pathway is amino-acid biosynthesis; L-arginine biosynthesis; L-ornithine and N-acetyl-L-glutamate from L-glutamate and N(2)-acetyl-L-ornithine (cyclic): step 1/1. The protein operates within amino-acid biosynthesis; L-arginine biosynthesis; N(2)-acetyl-L-ornithine from L-glutamate: step 1/4. Catalyzes two activities which are involved in the cyclic version of arginine biosynthesis: the synthesis of acetylglutamate from glutamate and acetyl-CoA, and of ornithine by transacetylation between acetylornithine and glutamate. In Sclerotinia sclerotiorum (strain ATCC 18683 / 1980 / Ss-1) (White mold), this protein is Arginine biosynthesis bifunctional protein ArgJ 1, mitochondrial.